The chain runs to 848 residues: ATP-dependent Clp protease ATP-binding subunit ClpC1 (848 aa).

The Clp R domain maps to 2–144 (FERFTDRARR…RQQVIQLLSG (143 aa)). Repeat regions lie at residues 5–70 (FTDR…IGQG) and 80–144 (FTPR…LLSG). The tract at residues 171-418 (LDQFGRNLTA…RMRIRRMTAP (248 aa)) is i. Residue 216-223 (GEPGVGKT) coordinates ATP. The UVR domain maps to 425-460 (DEKIAEARREKESAIDAQDFEKAASLRDREKTLVAQ). Positions 479–670 (VDDEQIAEVL…VLIFTSNLGT (192 aa)) are II. 553-560 (GPSGVGKT) serves as a coordination point for ATP. The segment at 821 to 848 (TGTRKPPAEPDLAKAGAHSAGGPEPAAR) is disordered.

This sequence belongs to the ClpA/ClpB family. ClpC subfamily.

Functionally, ATP-dependent specificity component of the Clp protease. It directs the protease to specific substrates. Can perform chaperone functions in the absence of ClpP. Degrades anti-sigma-E factor RseA in the presence of ClpP2. The sequence is that of ATP-dependent Clp protease ATP-binding subunit ClpC1 (clpC1) from Mycobacterium tuberculosis (strain ATCC 25618 / H37Rv).